A 624-amino-acid chain; its full sequence is Actin-related protein 8 (624 aa).

An N-acetylmethionine modification is found at M1. The segment covering 1–25 (MTQAEKGDAENGKEKGGEKEKEQRG) has biased composition (basic and acidic residues). The tract at residues 1–29 (MTQAEKGDAENGKEKGGEKEKEQRGVKRP) is disordered. Residues S55 and T56 each contribute to the ATP site. S132 bears the Phosphoserine mark. 283–286 (DVGD) is an ATP binding site. S412 carries the post-translational modification Phosphoserine. The interval 430–462 (SKQEQSAKATADRKSASKPIGFEGDLRGQSSDL) is disordered.

Belongs to the actin family. ARP8 subfamily. As to quaternary structure, component of the chromatin remodeling INO80 complex; specifically part of a complex module associated with the DBINO domain of INO80. Exists as monomers and dimers, but the dimer is most probably the biologically relevant form required for stable interactions with histones that exploits the twofold symmetry of the nucleosome core.

The protein localises to the nucleus. Its subcellular location is the chromosome. Plays an important role in the functional organization of mitotic chromosomes. Exhibits low basal ATPase activity, and unable to polymerize. In terms of biological role, proposed core component of the chromatin remodeling INO80 complex which is involved in transcriptional regulation, DNA replication and probably DNA repair. Required for the recruitment of INO80 (and probably the INO80 complex) to sites of DNA damage Strongly prefer nucleosomes and H3-H4 tetramers over H2A-H2B dimers, suggesting it may act as a nucleosome recognition module within the complex. This is Actin-related protein 8 (Actr8) from Mus musculus (Mouse).